The primary structure comprises 458 residues: MSQGKIVQIIGAVIDVEFPRDSIPRVYDALKVESTGLTLEVQQQLGDGVVRCIAMGSSDGLKRGLPVTNTGAAISVPVGTATLGRIMDVLGTPIDELGPVATEERMPIHRAAPKFDELSASSELLETGIKVIDLLCPFAKGGKVGLFGGAGVGKTVNMMELIRNIAIEHSGFSVFTGVGERTREGNDFYHEMKESNVLDKVALVYGQMNEPPGNRLRVALTGLTMAEKFRDEGRDVLLFVDNIYRYTLAGTEVSALLGRMPSAVGYQPTLAEEMGKFQERVASTKTGSITSIQAVYVPADDLTDPSPATTFAHLDATVVLSRDIASLGIYPAVDPLDSTSRQLDPLVVGDEHYSVARGVQMTLQKYKELRDIIAILGMDELSADDKLTVARARKIQRFLSQPFFVAEVFTGSPGKFVSLKDTIKGFKAILSGEYDHLPEQAFYMVGGIEEAVEKAASL.

148 to 155 (GGAGVGKT) serves as a coordination point for ATP.

The protein belongs to the ATPase alpha/beta chains family. As to quaternary structure, F-type ATPases have 2 components, CF(1) - the catalytic core - and CF(0) - the membrane proton channel. CF(1) has five subunits: alpha(3), beta(3), gamma(1), delta(1), epsilon(1). CF(0) has three main subunits: a(1), b(2) and c(9-12). The alpha and beta chains form an alternating ring which encloses part of the gamma chain. CF(1) is attached to CF(0) by a central stalk formed by the gamma and epsilon chains, while a peripheral stalk is formed by the delta and b chains.

It is found in the cell inner membrane. The enzyme catalyses ATP + H2O + 4 H(+)(in) = ADP + phosphate + 5 H(+)(out). In terms of biological role, produces ATP from ADP in the presence of a proton gradient across the membrane. The catalytic sites are hosted primarily by the beta subunits. In Laribacter hongkongensis (strain HLHK9), this protein is ATP synthase subunit beta.